The chain runs to 260 residues: 5'-nucleotidase SurE (260 aa).

Positions 8, 9, 43, and 96 each coordinate a divalent metal cation.

Belongs to the SurE nucleotidase family. Requires a divalent metal cation as cofactor.

The protein resides in the cytoplasm. It catalyses the reaction a ribonucleoside 5'-phosphate + H2O = a ribonucleoside + phosphate. Functionally, nucleotidase that shows phosphatase activity on nucleoside 5'-monophosphates. This is 5'-nucleotidase SurE from Ruegeria pomeroyi (strain ATCC 700808 / DSM 15171 / DSS-3) (Silicibacter pomeroyi).